A 237-amino-acid chain; its full sequence is Ribonuclease 3 (237 aa).

The RNase III domain maps to 6 to 133 (LIEVEKLIGI…VIAAVYLDKG (128 aa)). Residue glutamate 46 participates in Mg(2+) binding. Aspartate 50 is a catalytic residue. Residues aspartate 119 and glutamate 122 each contribute to the Mg(2+) site. Glutamate 122 is a catalytic residue. The DRBM domain occupies 160 to 229 (DFKTRLQEVL…AKAALQRLGE (70 aa)).

It belongs to the ribonuclease III family. In terms of assembly, homodimer. The cofactor is Mg(2+).

Its subcellular location is the cytoplasm. The enzyme catalyses Endonucleolytic cleavage to 5'-phosphomonoester.. Functionally, digests double-stranded RNA. Involved in the processing of primary rRNA transcript to yield the immediate precursors to the large and small rRNAs (23S and 16S). Processes some mRNAs, and tRNAs when they are encoded in the rRNA operon. Processes pre-crRNA and tracrRNA of type II CRISPR loci if present in the organism. This chain is Ribonuclease 3, found in Clostridium perfringens (strain 13 / Type A).